Reading from the N-terminus, the 1624-residue chain is ATP-binding cassette sub-family A member 6 (1624 aa).

A helical membrane pass occupies residues 31–51 (LLEWSIPIIIGLHMGLFSYLA). Residues asparagine 84 and asparagine 91 are each glycosylated (N-linked (GlcNAc...) asparagine). The next 6 membrane-spanning stretches (helical) occupy residues 222 to 242 (IFILFCLLYFSSFIYFASSNV), 267 to 287 (WGLIYVGFIFIISIFIAIIIT), 297 to 317 (FLVIFTLFFLYGLSLIAVTFL), 326 to 346 (VLTNLIVLFFTLFWGCVGFTV), 356 to 376 (EWVLSIFSPFAFTSGMAKVIF), and 395 to 415 (VMIAVFFILAFDSLLYLVLAL). The ABC transporter 1 domain occupies 478–713 (IRIRNIKKEY…WGLGYHLSLF (236 aa)). 514 to 521 (GHSGAGKS) contributes to the ATP binding site. N-linked (GlcNAc...) asparagine glycosylation is present at asparagine 576. The next 8 helical transmembrane spans lie at 854–874 (AFLIILLLLGIALLPLVIEYV), 971–991 (LHCFPILMNVISNGILHMLNH), 1005–1025 (FIVLVWTGIQETCLFILCVIC), 1058–1078 (WCGQAVVDISLFSGMLLTSYF), 1094–1114 (IVFSVIVLALGCAASLVFLTY), 1130–1150 (WSICFLLVIAITFEKVANGPF), 1154–1174 (LVISATMLVPSFALNGLLVVL), and 1194–1214 (AVDLLLCLIPYIHTLLFIFVL). One can recognise an ABC transporter 2 domain in the interval 1282–1520 (LHKEYAGQKK…FGQDYVLELR (239 aa)). Residue 1320–1327 (GPDGAGKS) participates in ATP binding.

This sequence belongs to the ABC transporter superfamily. ABCA family. In terms of tissue distribution, widely expressed with higher expression in heart, lung, brain, spleen and testis.

The protein localises to the golgi apparatus membrane. Functionally, probable transporter which may play a role in macrophage lipid transport and homeostasis. In Mus musculus (Mouse), this protein is ATP-binding cassette sub-family A member 6 (Abca6).